The following is a 505-amino-acid chain: Trans-cinnamate 4-monooxygenase (505 aa).

The chain crosses the membrane as a helical span at residues 3–23 (LLLLEKTLLALFIAATIAITI). Residues 212–217 (RSRLAQ) and alanine 305 each bind (E)-cinnamate. Residue cysteine 446 participates in heme binding.

Belongs to the cytochrome P450 family. Requires heme as cofactor.

It is found in the membrane. The enzyme catalyses (E)-cinnamate + reduced [NADPH--hemoprotein reductase] + O2 = (E)-4-coumarate + oxidized [NADPH--hemoprotein reductase] + H2O + H(+). Its pathway is phenylpropanoid metabolism; trans-4-coumarate biosynthesis; trans-4-coumarate from trans-cinnamate: step 1/1. Catalyzes the first oxidative step of the phenylpropanoid pathway in higher plants by transforming trans-cinnamate into p-coumarate. The compounds formed by this pathway are essential components for lignification, pollination, and defense against ultraviolet light, predators and pathogens. The polypeptide is Trans-cinnamate 4-monooxygenase (CYP73A19) (Cicer arietinum (Chickpea)).